Consider the following 286-residue polypeptide: 2-dehydro-3-deoxyphosphooctonate aldolase (286 aa).

Belongs to the KdsA family.

Its subcellular location is the cytoplasm. The enzyme catalyses D-arabinose 5-phosphate + phosphoenolpyruvate + H2O = 3-deoxy-alpha-D-manno-2-octulosonate-8-phosphate + phosphate. The protein operates within carbohydrate biosynthesis; 3-deoxy-D-manno-octulosonate biosynthesis; 3-deoxy-D-manno-octulosonate from D-ribulose 5-phosphate: step 2/3. It functions in the pathway bacterial outer membrane biogenesis; lipopolysaccharide biosynthesis. This is 2-dehydro-3-deoxyphosphooctonate aldolase from Shewanella denitrificans (strain OS217 / ATCC BAA-1090 / DSM 15013).